We begin with the raw amino-acid sequence, 324 residues long: Olfactory receptor 2T2 (324 aa).

Residues 1 to 26 (MGMEGLLQNSTNFVLTGLITHPAFPG) are Extracellular-facing. Asn-9 carries an N-linked (GlcNAc...) asparagine glycan. A helical transmembrane segment spans residues 27–50 (LLFAIVFSIFVVAITANLVMILLI). Topologically, residues 51–58 (HMDSRLHT) are cytoplasmic. A helical membrane pass occupies residues 59 to 80 (PMYFLLSQLSIMDTIYICITVP). Topologically, residues 81-101 (KMLQDLLSKDKTISFLGCAVQ) are extracellular. Cys-98 and Cys-190 are oxidised to a cystine. Residues 102 to 121 (IFLYLTLIGGEFFLLGLMAY) form a helical membrane-spanning segment. The Cytoplasmic segment spans residues 122–140 (DRYVAVCNPLRYPLLMNRR). A helical membrane pass occupies residues 141–159 (VCLFMVVGSWVGGSLDGFM). The Extracellular segment spans residues 160–196 (LTPVTMSFPFCRSREINHFFCEIPAVLKLSCTDTSLY). A helical transmembrane segment spans residues 197-220 (ETLMYACCVLMLLIPLSVISVSYT). Topologically, residues 221–237 (HILLTVHRMNSAEGRRK) are cytoplasmic. A helical membrane pass occupies residues 238-260 (AFATCSSHIMVVSVFYGAAFYTN). Residues 261–273 (VLPHSYHTPEKDK) are Extracellular-facing. A helical membrane pass occupies residues 274–293 (VVSAFYTILTPMLNPLIYSL). At 294–324 (RNKDVAAALRKVLGRCGSSQSIRVATVIRKG) the chain is on the cytoplasmic side.

Belongs to the G-protein coupled receptor 1 family.

It is found in the cell membrane. In terms of biological role, odorant receptor. This chain is Olfactory receptor 2T2 (OR2T2), found in Homo sapiens (Human).